A 186-amino-acid polypeptide reads, in one-letter code: Elongation factor P (186 aa).

It belongs to the elongation factor P family.

The protein resides in the cytoplasm. Its pathway is protein biosynthesis; polypeptide chain elongation. Its function is as follows. Involved in peptide bond synthesis. Stimulates efficient translation and peptide-bond synthesis on native or reconstituted 70S ribosomes in vitro. Probably functions indirectly by altering the affinity of the ribosome for aminoacyl-tRNA, thus increasing their reactivity as acceptors for peptidyl transferase. This chain is Elongation factor P, found in Beutenbergia cavernae (strain ATCC BAA-8 / DSM 12333 / CCUG 43141 / JCM 11478 / NBRC 16432 / NCIMB 13614 / HKI 0122).